A 105-amino-acid polypeptide reads, in one-letter code: Met repressor (105 aa).

It belongs to the MetJ family. As to quaternary structure, homodimer.

It localises to the cytoplasm. Functionally, this regulatory protein, when combined with SAM (S-adenosylmethionine) represses the expression of the methionine regulon and of enzymes involved in SAM synthesis. This Histophilus somni (strain 129Pt) (Haemophilus somnus) protein is Met repressor.